Reading from the N-terminus, the 209-residue chain is MADS-box transcription factor 2 (209 aa).

In terms of domain architecture, MADS-box spans 1-61 (MGRGKIEIKR…GKLYDYCSPK (61 aa)). Residues 84–170 (HKSLSAEIDR…AFKLHQQDIA (87 aa)) enclose the K-box domain.

Highly expressed in anthers and carpels. Expressed in pollen, tapetum and stigma.

The protein localises to the nucleus. In terms of biological role, probable transcription factor involved in the development of floral organs. B-class protein required for normal development of lodicules (whorl 2). The sequence is that of MADS-box transcription factor 2 (MADS2) from Oryza sativa subsp. japonica (Rice).